Reading from the N-terminus, the 884-residue chain is Protein translocase subunit SecA (884 aa).

Residues Q83, 101 to 105 (GEGKT), and D491 contribute to the ATP site.

This sequence belongs to the SecA family.

It localises to the plastid. It is found in the chloroplast stroma. Its subcellular location is the chloroplast thylakoid membrane. It carries out the reaction ATP + H2O + cellular proteinSide 1 = ADP + phosphate + cellular proteinSide 2.. Functionally, has a central role in coupling the hydrolysis of ATP to the transfer of proteins across the thylakoid membrane. This chain is Protein translocase subunit SecA, found in Porphyra purpurea (Red seaweed).